The following is a 762-amino-acid chain: 5-methyltetrahydropteroyltriglutamate--homocysteine methyltransferase (762 aa).

Residues 17 to 20 and K111 contribute to the 5-methyltetrahydropteroyltri-L-glutamate site; that span reads REWK. L-homocysteine is bound by residues 435–437 and E488; that span reads IGS. Residues 435–437 and E488 each bind L-methionine; that span reads IGS. 5-methyltetrahydropteroyltri-L-glutamate contacts are provided by residues 519–520 and W565; that span reads RC. D603 is an L-homocysteine binding site. Residue D603 participates in L-methionine binding. E609 is a 5-methyltetrahydropteroyltri-L-glutamate binding site. 3 residues coordinate Zn(2+): H645, C647, and E669. Catalysis depends on H698, which acts as the Proton donor. C730 lines the Zn(2+) pocket.

The protein belongs to the vitamin-B12 independent methionine synthase family. The cofactor is Zn(2+).

It carries out the reaction 5-methyltetrahydropteroyltri-L-glutamate + L-homocysteine = tetrahydropteroyltri-L-glutamate + L-methionine. Its pathway is amino-acid biosynthesis; L-methionine biosynthesis via de novo pathway; L-methionine from L-homocysteine (MetE route): step 1/1. Its function is as follows. Catalyzes the transfer of a methyl group from 5-methyltetrahydrofolate to homocysteine resulting in methionine formation. In Bacillus cytotoxicus (strain DSM 22905 / CIP 110041 / 391-98 / NVH 391-98), this protein is 5-methyltetrahydropteroyltriglutamate--homocysteine methyltransferase.